Consider the following 234-residue polypeptide: Octanoyltransferase (234 aa).

The region spanning 35 to 221 (DGAPELVWFL…AFQQVFASPL (187 aa)) is the BPL/LPL catalytic domain. Substrate is bound by residues 74 to 81 (RGGQYTYH), 150 to 152 (AIG), and 163 to 165 (GIS). Residue C181 is the Acyl-thioester intermediate of the active site.

It belongs to the LipB family.

The protein localises to the cytoplasm. It catalyses the reaction octanoyl-[ACP] + L-lysyl-[protein] = N(6)-octanoyl-L-lysyl-[protein] + holo-[ACP] + H(+). It functions in the pathway protein modification; protein lipoylation via endogenous pathway; protein N(6)-(lipoyl)lysine from octanoyl-[acyl-carrier-protein]: step 1/2. Catalyzes the transfer of endogenously produced octanoic acid from octanoyl-acyl-carrier-protein onto the lipoyl domains of lipoate-dependent enzymes. Lipoyl-ACP can also act as a substrate although octanoyl-ACP is likely to be the physiological substrate. The chain is Octanoyltransferase from Hyphomonas neptunium (strain ATCC 15444).